Consider the following 203-residue polypeptide: E3 ubiquitin-protein ligase RNF152 (203 aa).

The segment at 12 to 55 (CQICFNYYSPRRRPKLLDCKHTCCSVCLQQMRTSQKDVRCPWCR) adopts an RING-type zinc-finger fold. The interval 106–165 (ISKERTLLPGDMGCRLLPGSQQKSLTVVTIPAEQQPLQGGAPQEAVEEEPDRRGVAKSST) is necessary for interaction with RRAGA. Positions 140 to 159 (QPLQGGAPQEAVEEEPDRRG) are disordered. Residues 167–187 (SGVCTVILVACVLVFLLGIVL) traverse the membrane as a helical segment.

Belongs to the RNF152 family. Interacts with RRAGA (inactive GDP-bound form); stimulated by amino acid starvation. Interacts with SEC16A. Post-translationally, ubiquitinated. Autoubiquitinated in vitro, leading to its degradation by the proteasome.

The protein resides in the lysosome membrane. The enzyme catalyses S-ubiquitinyl-[E2 ubiquitin-conjugating enzyme]-L-cysteine + [acceptor protein]-L-lysine = [E2 ubiquitin-conjugating enzyme]-L-cysteine + N(6)-ubiquitinyl-[acceptor protein]-L-lysine.. It participates in protein modification; protein ubiquitination. Functionally, E3 ubiquitin-protein ligase that acts as a negative regulator of mTORC1 signaling by mediating ubiquitination of RagA/RRAGA and RHEB. Catalyzes 'Lys-63'-linked polyubiquitination of RagA/RRAGA in response to amino acid starvation, thereby regulating mTORC1 signaling. Also mediates monoubiquitination of RHEB, promoting its association with the TSC-TBC complex and subsequent inhibition. Also mediates 'Lys-48'-linked polyubiquitination of target proteins and their subsequent targeting to the proteasome for degradation. Induces apoptosis when overexpressed. This is E3 ubiquitin-protein ligase RNF152 from Rattus norvegicus (Rat).